Consider the following 82-residue polypeptide: Translational regulator CsrA (82 aa).

Belongs to the CsrA/RsmA family. As to quaternary structure, homodimer; the beta-strands of each monomer intercalate to form a hydrophobic core, while the alpha-helices form wings that extend away from the core.

The protein resides in the cytoplasm. A translational regulator that binds mRNA to regulate translation initiation and/or mRNA stability. Usually binds in the 5'-UTR at or near the Shine-Dalgarno sequence preventing ribosome-binding, thus repressing translation. Its main target seems to be the major flagellin gene, while its function is anatagonized by FliW. The protein is Translational regulator CsrA of Geobacillus sp. (strain WCH70).